The chain runs to 302 residues: Putative 2-dehydro-3-deoxy-D-gluconate aldolase YagE (302 aa).

Residues serine 49 and tyrosine 112 each act as charge relay system in the active site. The active-site Proton donor is the tyrosine 138. Catalysis depends on lysine 167, which acts as the Schiff-base intermediate with substrate.

This sequence belongs to the DapA family. As to quaternary structure, a dimer of dimers.

The protein localises to the cytoplasm. It catalyses the reaction 2-dehydro-3-deoxy-D-gluconate = D-glyceraldehyde + pyruvate. It carries out the reaction 2-dehydro-3-deoxy-D-arabinonate = glycolaldehyde + pyruvate. Its function is as follows. Catalyzes the formation of 2-keto-3-deoxy-gluconate (KDG) from pyruvate and glyceraldehyde. May also function as a 2-dehydro-3-deoxy-D-pentonate aldolase. Overexpression leads to increased growth (over 2 hours) in the presence of the antibiotics norfloxacin, ampicillin and streptomycin. The protein is Putative 2-dehydro-3-deoxy-D-gluconate aldolase YagE (yagE) of Escherichia coli (strain K12).